The following is a 427-amino-acid chain: Male abnormal protein mab-31 (427 aa).

The tract at residues 68–102 (PIGTGRFPNPSPPRSSSGTNTPIRKTPGSRPDRGK) is disordered.

Its subcellular location is the nucleus. Functionally, putative transcription factor. Acts in a TGF-beta-like pathway during development of male-specific genital sensilla (simple sense organs), known as rays. Involved in production of reactive oxygen species (ROS), acting downstream of the TGF-beta-like dbl-1 signaling pathway. Involved in locomotory behavior. The protein is Male abnormal protein mab-31 of Caenorhabditis elegans.